Here is a 475-residue protein sequence, read N- to C-terminus: Nitrogenase vanadium-iron protein beta chain (475 aa).

Positions 31, 56, 115, and 153 each coordinate [8Fe-7S] cluster.

It belongs to the NifD/NifK/NifE/NifN family. Hexamer of two alpha, two beta, and two delta chains. It depends on [8Fe-7S] cluster as a cofactor.

It carries out the reaction N2 + 8 reduced [2Fe-2S]-[ferredoxin] + 16 ATP + 16 H2O = H2 + 8 oxidized [2Fe-2S]-[ferredoxin] + 2 NH4(+) + 16 ADP + 16 phosphate + 6 H(+). Its function is as follows. This vanadium-iron protein is part of the nitrogenase complex that catalyzes the key enzymatic reactions in nitrogen fixation. In Azotobacter vinelandii, this protein is Nitrogenase vanadium-iron protein beta chain (vnfK).